Here is a 386-residue protein sequence, read N- to C-terminus: MKLTELCLKNFRNYSNLKLNFKKPIILFFGANAQGKTNLLEAIYYLATGKSHRAQKEKELIRWETSGFYLKGELEKEQAQYTLEIITNYQNGKNKNLKVNNLSQTNTRNFLKTMNVVIFSPEDLMLVKGTPDNRRRFIDQEITQVDPSYDFYLKNYFKALRQRNKLLKTYQDKNTLAQHLPPWNQQLVHYGSKIILKREEVIHKIRLLARLIYRKITNQTENLELDYSPSLEFEDCKFREQLSGEKLAHKFLNTLNENLQSDIEKRTTSIGPHRDDLIFKINNKDARQFGSQGQQRTTVLALKMAELEMIKGEKGEFPILLLDDVLSELDDNRKKHLLNLTEGRVQTFVTSTSMEDFNGDVDIKAKSQVFRIDNGEAVKLNAGNQE.

ATP is bound at residue 30–37 (GANAQGKT).

The protein belongs to the RecF family.

Its subcellular location is the cytoplasm. Its function is as follows. The RecF protein is involved in DNA metabolism; it is required for DNA replication and normal SOS inducibility. RecF binds preferentially to single-stranded, linear DNA. It also seems to bind ATP. This chain is DNA replication and repair protein RecF, found in Natranaerobius thermophilus (strain ATCC BAA-1301 / DSM 18059 / JW/NM-WN-LF).